Consider the following 372-residue polypeptide: Putative actin-27 (372 aa).

It belongs to the actin family.

The protein localises to the cytoplasm. Its subcellular location is the cytoskeleton. It catalyses the reaction ATP + H2O = ADP + phosphate + H(+). In terms of biological role, actins are highly conserved proteins that are involved in various types of cell motility and are ubiquitously expressed in all eukaryotic cells. Multiple isoforms are involved in various cellular functions such as cytoskeleton structure, cell mobility, chromosome movement and muscle contraction. This chain is Putative actin-27 (act27), found in Dictyostelium discoideum (Social amoeba).